The sequence spans 213 residues: Large ribosomal subunit protein uL1 (213 aa).

This sequence belongs to the universal ribosomal protein uL1 family.

In Chlamydomonas reinhardtii (Chlamydomonas smithii), this protein is Large ribosomal subunit protein uL1 (RPL10A).